Consider the following 126-residue polypeptide: Large ribosomal subunit protein uL22 (126 aa).

It belongs to the universal ribosomal protein uL22 family. As to quaternary structure, part of the 50S ribosomal subunit.

Its function is as follows. This protein binds specifically to 23S rRNA; its binding is stimulated by other ribosomal proteins, e.g. L4, L17, and L20. It is important during the early stages of 50S assembly. It makes multiple contacts with different domains of the 23S rRNA in the assembled 50S subunit and ribosome. Functionally, the globular domain of the protein is located near the polypeptide exit tunnel on the outside of the subunit, while an extended beta-hairpin is found that lines the wall of the exit tunnel in the center of the 70S ribosome. The chain is Large ribosomal subunit protein uL22 from Paracoccus denitrificans (strain Pd 1222).